We begin with the raw amino-acid sequence, 635 residues long: 1-deoxy-D-xylulose-5-phosphate synthase (635 aa).

Residues histidine 72 and 113-115 (GHA) contribute to the thiamine diphosphate site. Aspartate 144 serves as a coordination point for Mg(2+). Thiamine diphosphate is bound by residues 145-146 (GA), asparagine 174, tyrosine 287, and glutamate 370. Position 174 (asparagine 174) interacts with Mg(2+).

This sequence belongs to the transketolase family. DXPS subfamily. In terms of assembly, homodimer. Requires Mg(2+) as cofactor. Thiamine diphosphate is required as a cofactor.

It catalyses the reaction D-glyceraldehyde 3-phosphate + pyruvate + H(+) = 1-deoxy-D-xylulose 5-phosphate + CO2. Its pathway is metabolic intermediate biosynthesis; 1-deoxy-D-xylulose 5-phosphate biosynthesis; 1-deoxy-D-xylulose 5-phosphate from D-glyceraldehyde 3-phosphate and pyruvate: step 1/1. Functionally, catalyzes the acyloin condensation reaction between C atoms 2 and 3 of pyruvate and glyceraldehyde 3-phosphate to yield 1-deoxy-D-xylulose-5-phosphate (DXP). This is 1-deoxy-D-xylulose-5-phosphate synthase from Trichormus variabilis (strain ATCC 29413 / PCC 7937) (Anabaena variabilis).